Reading from the N-terminus, the 389-residue chain is Lipid-A-disaccharide synthase (389 aa).

Belongs to the LpxB family.

It catalyses the reaction a lipid X + a UDP-2-N,3-O-bis[(3R)-3-hydroxyacyl]-alpha-D-glucosamine = a lipid A disaccharide + UDP + H(+). The protein operates within bacterial outer membrane biogenesis; LPS lipid A biosynthesis. Condensation of UDP-2,3-diacylglucosamine and 2,3-diacylglucosamine-1-phosphate to form lipid A disaccharide, a precursor of lipid A, a phosphorylated glycolipid that anchors the lipopolysaccharide to the outer membrane of the cell. This Burkholderia vietnamiensis (strain G4 / LMG 22486) (Burkholderia cepacia (strain R1808)) protein is Lipid-A-disaccharide synthase.